A 301-amino-acid chain; its full sequence is Probable alpha-L-glutamate ligase (301 aa).

The ATP-grasp domain occupies 104–287 (LQLLSRKGIG…IAGMIIEYIE (184 aa)). Residues K141, 178–179 (EY), D187, and 211–213 (RSN) contribute to the ATP site. Mg(2+)-binding residues include D248, E260, and N262. D248, E260, and N262 together coordinate Mn(2+).

This sequence belongs to the RimK family. Mg(2+) is required as a cofactor. Mn(2+) serves as cofactor.

This is Probable alpha-L-glutamate ligase from Methanococcoides burtonii (strain DSM 6242 / NBRC 107633 / OCM 468 / ACE-M).